Here is a 195-residue protein sequence, read N- to C-terminus: Imidazoleglycerol-phosphate dehydratase (195 aa).

Belongs to the imidazoleglycerol-phosphate dehydratase family.

It localises to the cytoplasm. It catalyses the reaction D-erythro-1-(imidazol-4-yl)glycerol 3-phosphate = 3-(imidazol-4-yl)-2-oxopropyl phosphate + H2O. It participates in amino-acid biosynthesis; L-histidine biosynthesis; L-histidine from 5-phospho-alpha-D-ribose 1-diphosphate: step 6/9. The protein is Imidazoleglycerol-phosphate dehydratase of Cereibacter sphaeroides (strain ATCC 17029 / ATH 2.4.9) (Rhodobacter sphaeroides).